We begin with the raw amino-acid sequence, 187 residues long: Holliday junction branch migration complex subunit RuvA (187 aa).

The domain I stretch occupies residues 1-64 (MIEYIRGIIE…EDGFQIFGFK (64 aa)). Residues 65 to 136 (RKEELELFEK…ELKDKVPKEV (72 aa)) form a domain II region. Residues 136-139 (VVVP) are flexible linker. The interval 140–187 (KEDSLLNEALEALLALGYTKSEAIYALSDVNCESVEQAVKEALKKLAK) is domain III.

It belongs to the RuvA family. In terms of assembly, homotetramer. Forms an RuvA(8)-RuvB(12)-Holliday junction (HJ) complex. HJ DNA is sandwiched between 2 RuvA tetramers; dsDNA enters through RuvA and exits via RuvB. An RuvB hexamer assembles on each DNA strand where it exits the tetramer. Each RuvB hexamer is contacted by two RuvA subunits (via domain III) on 2 adjacent RuvB subunits; this complex drives branch migration. In the full resolvosome a probable DNA-RuvA(4)-RuvB(12)-RuvC(2) complex forms which resolves the HJ.

Its subcellular location is the cytoplasm. The RuvA-RuvB-RuvC complex processes Holliday junction (HJ) DNA during genetic recombination and DNA repair, while the RuvA-RuvB complex plays an important role in the rescue of blocked DNA replication forks via replication fork reversal (RFR). RuvA specifically binds to HJ cruciform DNA, conferring on it an open structure. The RuvB hexamer acts as an ATP-dependent pump, pulling dsDNA into and through the RuvAB complex. HJ branch migration allows RuvC to scan DNA until it finds its consensus sequence, where it cleaves and resolves the cruciform DNA. This is Holliday junction branch migration complex subunit RuvA from Caldanaerobacter subterraneus subsp. tengcongensis (strain DSM 15242 / JCM 11007 / NBRC 100824 / MB4) (Thermoanaerobacter tengcongensis).